The sequence spans 625 residues: Protein LEO1 homolog (625 aa).

2 disordered regions span residues 1–214 and 415–625; these read MVKG…DMVL and EREK…SDED. Composition is skewed to acidic residues over residues 40–55 and 63–80; these read DEAE…GEAE and EAES…PGES. 3 stretches are compositionally biased toward basic and acidic residues: residues 97-113, 121-137, and 182-197; these read SEAR…EHGG, QEVV…KHYE, and EYVR…RSPI. The residue at position 203 (S203) is a Phosphoserine. The segment covering 415–425 has biased composition (basic and acidic residues); sequence EREKEKREKAE. Residues 415 to 539 are a coiled coil; the sequence is EREKEKREKA…ETEEEEEEKS (125 aa). Over residues 426-436 the composition is skewed to polar residues; sequence SQNLKASTKLS. Over residues 471-491 the composition is skewed to basic and acidic residues; the sequence is YRSNRGYEEDLEAEAQRERRI. Residues 492-501 show a composition bias toward basic residues; sequence LNAKKSHKGI. The segment covering 523–537 has biased composition (acidic residues); that stretch reads EREESEYETEEEEEE. Over residues 538–547 the composition is skewed to basic and acidic residues; it reads KSPARGRGKD. S548, S570, S600, S605, and S622 each carry phosphoserine. Residues 548–561 are compositionally biased toward acidic residues; it reads SEDEYEEDAEEDEE.

Belongs to the LEO1 family. Component of the nuclear PAF1 complex (PAF1C), which consists of VIP2/ELF7/PAF1, VIP3/SKI8/WDR61, VIP4/LEO1, VIP5/RTF1, VIP6/ELF8/CTR9 and CDC73. Interacts with VIP3 and VIP6. Expressed in roots, shoot apices, stems, cauline leaves, inflorescence apices and flowers.

The protein localises to the nucleus. In terms of biological role, component of the PAF1 complex (PAF1C) which is involved in histone modifications such as methylation on histone H3 'Lys-4' (H3K4me3). Involved in regulation of flowering time. Required for the expression of the flowering repressor and MADS box gene FLC. Involved in the control of seed dormancy and germination. This is Protein LEO1 homolog from Arabidopsis thaliana (Mouse-ear cress).